We begin with the raw amino-acid sequence, 414 residues long: Serine hydroxymethyltransferase (414 aa).

(6S)-5,6,7,8-tetrahydrofolate is bound by residues Leu121 and 125-127 (GHL). Lys229 is modified (N6-(pyridoxal phosphate)lysine).

Belongs to the SHMT family. Homodimer. The cofactor is pyridoxal 5'-phosphate.

It is found in the cytoplasm. The catalysed reaction is (6R)-5,10-methylene-5,6,7,8-tetrahydrofolate + glycine + H2O = (6S)-5,6,7,8-tetrahydrofolate + L-serine. The protein operates within one-carbon metabolism; tetrahydrofolate interconversion. Its pathway is amino-acid biosynthesis; glycine biosynthesis; glycine from L-serine: step 1/1. Its function is as follows. Catalyzes the reversible interconversion of serine and glycine with tetrahydrofolate (THF) serving as the one-carbon carrier. This reaction serves as the major source of one-carbon groups required for the biosynthesis of purines, thymidylate, methionine, and other important biomolecules. Also exhibits THF-independent aldolase activity toward beta-hydroxyamino acids, producing glycine and aldehydes, via a retro-aldol mechanism. The protein is Serine hydroxymethyltransferase of Janthinobacterium sp. (strain Marseille) (Minibacterium massiliensis).